A 361-amino-acid chain; its full sequence is Polyribonucleotide 5'-hydroxyl-kinase MJ1315 (361 aa).

39-46 serves as a coordination point for ATP; it reads GGVDSGKT.

A divalent metal cation serves as cofactor.

The catalysed reaction is a 5'-end dephospho-2'-deoxyribonucleoside-DNA + ATP = a 5'-end 5'-phospho-2'-deoxyribonucleoside-DNA + ADP + H(+). The enzyme catalyses a 5'-end dephospho-ribonucleoside-RNA + ATP = a 5'-end 5'-phospho-ribonucleoside-RNA + ADP + H(+). Its function is as follows. Polynucleotide kinase that can phosphorylate the 5'-hydroxyl groups of both single-stranded RNA (ssRNA) and single-stranded DNA (ssDNA). Exhibits a strong preference for ssRNA. This Methanocaldococcus jannaschii (strain ATCC 43067 / DSM 2661 / JAL-1 / JCM 10045 / NBRC 100440) (Methanococcus jannaschii) protein is Polyribonucleotide 5'-hydroxyl-kinase MJ1315.